The primary structure comprises 305 residues: NADH-ubiquinone oxidoreductase chain 1 (305 aa).

Helical transmembrane passes span 3–23 (WVAVIVSIIPFVGVLLAVGFY), 71–91 (VGPFILAPALMLAISLLGWLL), 99–119 (VFYVFGVILFMVITSVSVYGV), 145–165 (YEIPMGFIFFCVVLCSGVFMF), 175–195 (LFFFFLPLCVVMLVWMLCMLA), 221–241 (GGGFAVMFIAEYSSILLSSVM), 246–266 (FFGGNEALVGFFMMVFAIFFV), and 285–305 (WTVLLCVMLTASVCVVVLVGV).

It belongs to the complex I subunit 1 family.

Its subcellular location is the mitochondrion inner membrane. The catalysed reaction is a ubiquinone + NADH + 5 H(+)(in) = a ubiquinol + NAD(+) + 4 H(+)(out). Functionally, core subunit of the mitochondrial membrane respiratory chain NADH dehydrogenase (Complex I) that is believed to belong to the minimal assembly required for catalysis. Complex I functions in the transfer of electrons from NADH to the respiratory chain. The immediate electron acceptor for the enzyme is believed to be ubiquinone. This Mytilus edulis (Blue mussel) protein is NADH-ubiquinone oxidoreductase chain 1 (ND1).